Consider the following 241-residue polypeptide: MTKDTLFSTPIAKLGDFTFDESVAEVFPDMIQRSIPGYANIITAIGMLASRFVTANSNVYDLGCSRGAATLSARRHINQPGVKIIGVDNSQPMVDRCRQHVSAYQSTIPVDIICDDIRHIEIENASMVILNFTLQFLPPEDRRSLLSKIYQGLQPNGILVLSEKFHFEDQNMNALLIDLHHQFKRANGYSELEVSQKRTALENVMRTDSIQAHKMRLAEVGFQQVELWFQCFNFGSMIAVK.

S-adenosyl-L-methionine is bound by residues tyrosine 38, 63 to 65 (GCS), 88 to 89 (DN), 116 to 117 (DI), asparagine 131, and arginine 198.

This sequence belongs to the class I-like SAM-binding methyltransferase superfamily. Cx-SAM synthase family. As to quaternary structure, homodimer.

It catalyses the reaction prephenate + S-adenosyl-L-methionine = carboxy-S-adenosyl-L-methionine + 3-phenylpyruvate + H2O. Catalyzes the conversion of S-adenosyl-L-methionine (SAM) to carboxy-S-adenosyl-L-methionine (Cx-SAM). This Pasteurella multocida (strain Pm70) protein is Carboxy-S-adenosyl-L-methionine synthase.